A 359-amino-acid chain; its full sequence is 4-galactosyl-N-acetylglucosaminide 3-alpha-L-fucosyltransferase FUT6 (359 aa).

At 1–14 the chain is on the cytoplasmic side; sequence MDPLGPAKPQWSCR. Residues 15–34 traverse the membrane as a helical; Signal-anchor for type II membrane protein segment; that stretch reads CCLTTLLFQLLVAVCFFSYL. Residues 35–359 lie on the Lumenal side of the membrane; sequence RVSRDDPTVY…QTRSITAWFT (325 aa). N-linked (GlcNAc...) asparagine glycans are attached at residues asparagine 46, asparagine 91, asparagine 153, and asparagine 184. The interval 73–112 is determines site-specific fucosylation; sequence KPTALPRCSEMLPGTADCNITADRKVYPQADAVIVHHREV.

The protein belongs to the glycosyltransferase 10 family. Homodimer and monomer. Monomer (secreted form). Post-translationally, N-glycosylated. In terms of processing, proteolytic cleavage releases a secreted glycoform of 43 kDa.

Its subcellular location is the golgi apparatus. The protein resides in the golgi stack membrane. It is found in the secreted. The enzyme catalyses a beta-D-galactosyl-(1-&gt;4)-N-acetyl-beta-D-glucosaminyl derivative + GDP-beta-L-fucose = a beta-D-galactosyl-(1-&gt;4)-[alpha-L-fucosyl-(1-&gt;3)]-N-acetyl-beta-D-glucosaminyl derivative + GDP + H(+). It catalyses the reaction an N-acetyl-alpha-neuraminyl-(2-&gt;3)-beta-D-galactosyl-(1-&gt;4)-N-acetyl-beta-D-glucosaminyl derivative + GDP-beta-L-fucose = an alpha-Neu5Ac-(2-&gt;3)-beta-D-Gal-(1-&gt;4)-[alpha-L-Fuc-(1-&gt;3)]-beta-D-GlcNAc derivative + GDP + H(+). The catalysed reaction is an alpha-Neu5Ac-(2-&gt;3)-beta-D-Gal-(1-&gt;4)-beta-D-GlcNAc-(1-&gt;3)-beta-D-Gal-(1-&gt;4)-[alpha-L-Fuc-(1-&gt;3)]-beta-D-GlcNAc derivative + GDP-beta-L-fucose = an alpha-Neu5Ac-(2-&gt;3)-beta-D-Gal-(1-&gt;4)-[alpha-L-Fuc-(1-&gt;3)]-beta-D-GlcNAc-(1-&gt;3)-beta-D-Gal-(1-&gt;4)-[alpha-L-Fuc-(1-&gt;3)]-beta-D-GlcNAc derivative + GDP + H(+). It carries out the reaction a neolactoside nLc6Cer + GDP-beta-L-fucose = beta-D-Gal-(1-&gt;4)-[alpha-L-Fuc-(1-&gt;3)]-beta-D-GlcNAc-(1-&gt;3)-beta-D-Gal-(1-&gt;4)-beta-D-GlcNAc-(1-&gt;3)-beta-D-Gal-(1-&gt;4)-beta-D-Glc-(1&lt;-&gt;1')-Cer + GDP + H(+). The enzyme catalyses a neolactoside nLc6Cer + GDP-beta-L-fucose = beta-D-galactosyl-(1-&gt;4)-N-acetyl-beta-D-glucosaminyl-(1-&gt;3)-beta-D-galactosyl-(1-&gt;4)-[alpha-L-fucosyl-(1-&gt;3)]-N-acetyl-beta-D-glucosaminyl-(1-&gt;3)-beta-D-galactosyl-(1-&gt;4)-beta-D-glucosyl-(1&lt;-&gt;1')-ceramide + GDP + H(+). It catalyses the reaction a neolactoside VI(3)-alpha-NeuNAc-nLc6Cer + GDP-beta-L-fucose = a neolactoside VI(3)-alpha-NeuAc,V(3)-alphaFuc-nLc6Cer + GDP + H(+). The catalysed reaction is beta-D-galactosyl-(1-&gt;4)-N-acetyl-D-glucosamine + GDP-beta-L-fucose = beta-D-galactosyl-(1-&gt;4)-[alpha-L-fucosyl-(1-&gt;3)]-N-acetyl-D-glucosamine + GDP + H(+). It carries out the reaction N-acetyl-alpha-neuraminosyl-(2-&gt;3)-beta-D-galactosyl-(1-&gt;4)-N-acetyl-beta-D-glucosamine + GDP-beta-L-fucose = N-acetyl-alpha-neuraminosyl-(2-&gt;3)-beta-D-galactosyl-(1-&gt;4)-[alpha-L-fucosyl-(1-&gt;3)]-N-acetyl-beta-D-glucosamine + GDP + H(+). The enzyme catalyses lactose + GDP-beta-L-fucose = beta-D-galactosyl-(1-&gt;4)-[alpha-L-fucosyl-(1-&gt;3)]-D-glucose + GDP + H(+). It catalyses the reaction alpha-L-Fuc-(1-&gt;2)-beta-D-Gal-(1-&gt;4)-D-Glc + GDP-beta-L-fucose = alpha-L-Fuc-(1-&gt;2)-beta-D-Gal-(1-&gt;4)-[alpha-L-Fuc-(1-&gt;3)]-D-Glc + GDP + H(+). The catalysed reaction is a beta-D-galactosyl-(1-&gt;4)-N-acetyl-beta-D-6-sulfooxy-glucosaminyl derivative + GDP-beta-L-fucose = a beta-D-galactosyl-(1-&gt;4)-[alpha-L-fucosyl-(1-&gt;3)]-N-acetyl-beta-D-6-sulfooxy-glucosaminyl derivative + GDP + H(+). It participates in protein modification; protein glycosylation. Catalyzes the transfer of L-fucose, from a guanosine diphosphate-beta-L-fucose, to the N-acetyl glucosamine (GlcNAc) of a distal alpha2,3 sialylated lactosamine unit of a glycoprotein- or glycolipid-linked sialopolylactosamines chain or of a distal or internal lactosamine unit of a neutral glycoprotein- or glycolipid-linked polylactosamines chain through an alpha-1,3 glycosidic linkage and participates in surface expression of the sialyl Lewis X (sLe(x)), Lewis X (Le(x)) and non sialylated VIM2 determinants. Moreover transfers fucose to H-type 2 (Fucalpha1-2Galbeta1-4GlcNAc) chain acceptor substrates and participates in difucosylated sialyl Lewis x determinants. Also fucosylates a polylactosamine substrate having a 6 sulfate modification at the GlcNAc moiety and gives rise to sialyl and non-sialyl 6-sulfo lewis X. Does not have activity towards type 1 ((Galbeta1-3GlcNAc)) and H-type 1 chain (Fucalpha1-2Galbeta1-3GlcNAc) acceptors substrates. The protein is 4-galactosyl-N-acetylglucosaminide 3-alpha-L-fucosyltransferase FUT6 of Gorilla gorilla gorilla (Western lowland gorilla).